The sequence spans 62 residues: Small ribosomal subunit protein uS14 (62 aa).

4 residues coordinate Zn(2+): Cys25, Cys28, Cys41, and Cys44.

It belongs to the universal ribosomal protein uS14 family. Zinc-binding uS14 subfamily. As to quaternary structure, part of the 30S ribosomal subunit. Contacts proteins S3 and S10. It depends on Zn(2+) as a cofactor.

Its function is as follows. Binds 16S rRNA, required for the assembly of 30S particles and may also be responsible for determining the conformation of the 16S rRNA at the A site. In Persephonella marina (strain DSM 14350 / EX-H1), this protein is Small ribosomal subunit protein uS14.